Here is a 907-residue protein sequence, read N- to C-terminus: Protein translocase subunit SecA (907 aa).

Residues glutamine 87, 105 to 109 (GEGKT), and aspartate 512 contribute to the ATP site. The segment at 869-897 (AESLSAHTPVVREGEKVGRNDPCPCGSGR) is disordered. Basic and acidic residues predominate over residues 878–887 (VVREGEKVGR). Residues cysteine 891, cysteine 893, cysteine 902, and histidine 903 each coordinate Zn(2+).

The protein belongs to the SecA family. In terms of assembly, monomer and homodimer. Part of the essential Sec protein translocation apparatus which comprises SecA, SecYEG and auxiliary proteins SecDF-YajC and YidC. Zn(2+) serves as cofactor.

It localises to the cell inner membrane. The protein resides in the cytoplasm. It carries out the reaction ATP + H2O + cellular proteinSide 1 = ADP + phosphate + cellular proteinSide 2.. Part of the Sec protein translocase complex. Interacts with the SecYEG preprotein conducting channel. Has a central role in coupling the hydrolysis of ATP to the transfer of proteins into and across the cell membrane, serving both as a receptor for the preprotein-SecB complex and as an ATP-driven molecular motor driving the stepwise translocation of polypeptide chains across the membrane. The sequence is that of Protein translocase subunit SecA from Shewanella sediminis (strain HAW-EB3).